The following is a 732-amino-acid chain: Interleukin-31 receptor subunit alpha (732 aa).

The N-terminal stretch at 1 to 19 (MMWTWALWMLPSLCKFSLA) is a signal peptide. The Extracellular segment spans residues 20-519 (ALPAKPENIS…FKTLSFSVFE (500 aa)). 5 consecutive Fibronectin type-III domains span residues 24 to 122 (KPEN…IAKT), 124 to 225 (PPKI…TEEE), 223 to 315 (EEEA…PVAT), 319 to 416 (PAIQ…QAYA), and 421 to 515 (PSEG…TLSF). Asn-37, Asn-67, Asn-93, Asn-166, Asn-187, Asn-277, Asn-283, Asn-395, Asn-455, and Asn-504 each carry an N-linked (GlcNAc...) asparagine glycan. The chain crosses the membrane as a helical span at residues 520 to 540 (IILITSLIGGGLLILIILTVA). Residues 541–732 (YGLKKPNKLT…KLPEHTKGEV (192 aa)) are Cytoplasmic-facing.

Belongs to the type I cytokine receptor family. Type 2 subfamily. In terms of assembly, heterodimer with OSMR. Interacts with JAK1 and STAT3. Post-translationally, N-glycosylated. Expressed in CD14- and CD56-positive blood cells. Expressed in macrophages. Expressed in keratinocytes. Expressed in a subset of dorsal root ganglia neurons (at protein level). Expressed at low levels in testis, ovary, brain, prostate, placenta, thymus, bone marrow, trachea and skin. Expressed in bronchial and alveolar epithelial cells and pulmonary fibroblasts. Detected in all of the myelomonocytic lineage. Isoform 6: Expressed at higher levels in lesional skin compared to healthy skin of atopic dermatitis patients.

It is found in the cell membrane. The protein resides in the presynaptic cell membrane. The protein localises to the cell projection. It localises to the axon. Associates with OSMR to form the interleukin-31 receptor which activates STAT3 and to a lower extent STAT1 and STAT5. May function in skin immunity. Mediates IL31-induced itch, probably in a manner dependent on cation channels TRPA1 and TRPV1. Positively regulates numbers and cycling status of immature subsets of myeloid progenitor cells in bone marrow in vivo and enhances myeloid progenitor cell survival in vitro. This chain is Interleukin-31 receptor subunit alpha (IL31RA), found in Homo sapiens (Human).